Reading from the N-terminus, the 350-residue chain is MAEAHVTKVGIVGIGFIGSDHLHRLTKTVANVDVTAVCDIVPGKAQKALDQQGLTATTYEDYHDLVNDPNVEVVVCTANNEAHYEIVMAALKAGKFTFCEKPLALDAKQCMDIIDSEKKLGRRMLQVGFMRHYAPEYVQMKKMIDDGVIGKPLMMDQRHYNQTQPEEYDSSRSIIETAIHEIDIDHWLVNDDYANIRVFSPKQTRHVQNAKIQDPQIVMIETKSGINIINEVFVRCQYGYDIKCDVIGEEGVLELPTVPQVATRLNAQYSTAILTDWKARFESAYDIEFRDFINHVSQNESPVGPSAWDGYIAAVTADAALKSLAEDGAKQDLDFPSTPAFYTESEKVSE.

It belongs to the Gfo/Idh/MocA family. In terms of assembly, homotetramer.

It catalyses the reaction myo-inositol + NAD(+) = scyllo-inosose + NADH + H(+). The catalysed reaction is 1D-chiro-inositol + NAD(+) = scyllo-inosine + NADH + H(+). It functions in the pathway polyol metabolism; myo-inositol degradation into acetyl-CoA; acetyl-CoA from myo-inositol: step 1/7. In terms of biological role, involved in the oxidation of myo-inositol (MI) and D-chiro-inositol (DCI) to 2-keto-myo-inositol (2KMI or 2-inosose) and 1-keto-D-chiro-inositol (1KDCI), respectively. The polypeptide is Inositol 2-dehydrogenase/D-chiro-inositol 3-dehydrogenase (Lactiplantibacillus plantarum (strain ATCC BAA-793 / NCIMB 8826 / WCFS1) (Lactobacillus plantarum)).